Consider the following 398-residue polypeptide: uncharacterized protein (398 aa).

Positions 313–398 (KTIKSSGSKT…TSKSIKYYEV (86 aa)) are disordered. Composition is skewed to low complexity over residues 314 to 333 (TIKSSGSKTSKSIGSKTNKS) and 343 to 398 (GSKT…YYEV).

This is an uncharacterized protein from Acanthamoeba polyphaga mimivirus (APMV).